We begin with the raw amino-acid sequence, 182 residues long: Biotin carboxyl carrier protein of acetyl-CoA carboxylase (182 aa).

The segment at 70–95 (AAPSPSPEPGTSRAADHAVTSSGSQP) is disordered. Residues 104 to 180 (LAEVASPMVG…EYNQPLMRIK (77 aa)) form the Biotinyl-binding domain. At Lys-146 the chain carries N6-biotinyllysine.

As to quaternary structure, homodimer.

Its pathway is lipid metabolism; fatty acid biosynthesis. Its function is as follows. This protein is a component of the acetyl coenzyme A carboxylase complex; first, biotin carboxylase catalyzes the carboxylation of the carrier protein and then the transcarboxylase transfers the carboxyl group to form malonyl-CoA. The sequence is that of Biotin carboxyl carrier protein of acetyl-CoA carboxylase (accB) from Nostoc sp. (strain PCC 7120 / SAG 25.82 / UTEX 2576).